Reading from the N-terminus, the 80-residue chain is FXYD domain-containing ion transport regulator 7 (80 aa).

Residues Met1–Tyr22 lie on the Extracellular side of the membrane. Thr3, Thr5, and Thr9 each carry an O-linked (GlcNAc) threonine glycan. The helical transmembrane segment at Ala23 to Ile45 threads the bilayer. The Cytoplasmic segment spans residues Ser46–Val80. The segment at Ser56–Val80 is disordered. A Phosphoserine modification is found at Ser73.

This sequence belongs to the FXYD family. Regulatory subunit of the sodium/potassium-transporting ATPase which is composed of a catalytic alpha subunit, a non-catalytic beta subunit and an additional regulatory subunit. The regulatory subunit, a member of the FXYD protein family, modulates the enzymatic activity in a tissue- and isoform-specific way by changing affinities of the Na+/K+-ATPase toward Na(+), K(+) or ATP. In terms of processing, O-glycosylated; required for stabilization and translocation to the plasma membrane. As to expression, expressed specifically in brain. Expressed in both neurons and glia.

It localises to the cell membrane. Associates with and regulates the activity of the sodium/potassium-transporting ATPase (NKA) which catalyzes the hydrolysis of ATP coupled with the exchange of Na(+) and K(+) ions across the plasma membrane. Reduces the apparent affinity for external K(+), an effect that depends on the presence of external Na(+) and voltage. Increases the apparent affinity for intracellular Na(+). The protein is FXYD domain-containing ion transport regulator 7 (Fxyd7) of Rattus norvegicus (Rat).